The following is a 425-amino-acid chain: Enolase (425 aa).

Q163 contributes to the (2R)-2-phosphoglycerate binding site. E205 serves as the catalytic Proton donor. Residues D242, E285, and D312 each contribute to the Mg(2+) site. The (2R)-2-phosphoglycerate site is built by K337, R366, S367, and K388. K337 functions as the Proton acceptor in the catalytic mechanism.

This sequence belongs to the enolase family. The cofactor is Mg(2+).

It is found in the cytoplasm. The protein resides in the secreted. It localises to the cell surface. It carries out the reaction (2R)-2-phosphoglycerate = phosphoenolpyruvate + H2O. Its pathway is carbohydrate degradation; glycolysis; pyruvate from D-glyceraldehyde 3-phosphate: step 4/5. Its function is as follows. Catalyzes the reversible conversion of 2-phosphoglycerate (2-PG) into phosphoenolpyruvate (PEP). It is essential for the degradation of carbohydrates via glycolysis. The protein is Enolase of Granulibacter bethesdensis (strain ATCC BAA-1260 / CGDNIH1).